Reading from the N-terminus, the 226-residue chain is NADH-quinone oxidoreductase subunit C (226 aa).

The interval 1–21 (MTEPTGDQTPEIIGVRRGMFG) is disordered.

The protein belongs to the complex I 30 kDa subunit family. NDH-1 is composed of 14 different subunits. Subunits NuoB, C, D, E, F, and G constitute the peripheral sector of the complex.

It is found in the cell membrane. The catalysed reaction is a quinone + NADH + 5 H(+)(in) = a quinol + NAD(+) + 4 H(+)(out). Functionally, NDH-1 shuttles electrons from NADH, via FMN and iron-sulfur (Fe-S) centers, to quinones in the respiratory chain. The immediate electron acceptor for the enzyme in this species is believed to be a menaquinone. Couples the redox reaction to proton translocation (for every two electrons transferred, four hydrogen ions are translocated across the cytoplasmic membrane), and thus conserves the redox energy in a proton gradient. This Mycolicibacterium gilvum (strain PYR-GCK) (Mycobacterium gilvum (strain PYR-GCK)) protein is NADH-quinone oxidoreductase subunit C.